The primary structure comprises 751 residues: Methionine--tRNA ligase, cytoplasmic (751 aa).

Serine 2 is subject to N-acetylserine. The interaction with ARC1 stretch occupies residues 36-92; sequence LKPEVDNDNAAMELRNTKEPFLLFDANAILRYVMDDFEGQTSDKYQFALASLQNLLY. The short motif at 205 to 215 is the 'HIGH' region element; sequence PYVNNVPHLGN. Lysine 411 is an ATP binding site. Positions 525–529 match the 'KMSKS' region motif; sequence KFSKS.

The protein belongs to the class-I aminoacyl-tRNA synthetase family. In terms of assembly, component of a yeast aminoacyl-tRNA synthase (aaRS) complex formed by methionyl-tRNA synthase MES1, glutamyl-tRNA synthase GUS1 and the tRNA aminoacylation cofactor ARC1 in a stoichiometric complex. Interacts (via N-ter) with ARC1 (via N-ter). Can also form a stable binary complex with ARC1 that is functional in terms of aminoacylation. ARC1 increases the affinity for cognate tRNAs due to the presence of a tRNA binding domain in the middle and C-terminal part of ARC1.

Its subcellular location is the cytoplasm. It catalyses the reaction tRNA(Met) + L-methionine + ATP = L-methionyl-tRNA(Met) + AMP + diphosphate. In terms of biological role, catalyzes the attachment of methionine to tRNA(Met) in a two-step reaction: methionine is first activated by ATP to form Met-AMP and then transferred to the acceptor end of tRNA(Met). This is Methionine--tRNA ligase, cytoplasmic (MES1) from Saccharomyces cerevisiae (strain ATCC 204508 / S288c) (Baker's yeast).